The primary structure comprises 161 residues: UPF0178 protein BruAb1_1955 (161 aa).

Belongs to the UPF0178 family.

The chain is UPF0178 protein BruAb1_1955 from Brucella abortus biovar 1 (strain 9-941).